The chain runs to 262 residues: Pyridoxine 5'-phosphate synthase (262 aa).

Residue N6 coordinates 3-amino-2-oxopropyl phosphate. 8–9 (DH) is a 1-deoxy-D-xylulose 5-phosphate binding site. R17 contributes to the 3-amino-2-oxopropyl phosphate binding site. Catalysis depends on H43, which acts as the Proton acceptor. The 1-deoxy-D-xylulose 5-phosphate site is built by R45 and H50. The active-site Proton acceptor is the E70. T102 provides a ligand contact to 1-deoxy-D-xylulose 5-phosphate. H215 functions as the Proton donor in the catalytic mechanism. Residues G216 and 237-238 (GH) each bind 3-amino-2-oxopropyl phosphate.

Belongs to the PNP synthase family. As to quaternary structure, homooctamer; tetramer of dimers.

The protein localises to the cytoplasm. The catalysed reaction is 3-amino-2-oxopropyl phosphate + 1-deoxy-D-xylulose 5-phosphate = pyridoxine 5'-phosphate + phosphate + 2 H2O + H(+). Its pathway is cofactor biosynthesis; pyridoxine 5'-phosphate biosynthesis; pyridoxine 5'-phosphate from D-erythrose 4-phosphate: step 5/5. Its function is as follows. Catalyzes the complicated ring closure reaction between the two acyclic compounds 1-deoxy-D-xylulose-5-phosphate (DXP) and 3-amino-2-oxopropyl phosphate (1-amino-acetone-3-phosphate or AAP) to form pyridoxine 5'-phosphate (PNP) and inorganic phosphate. This Helicobacter pylori (strain HPAG1) protein is Pyridoxine 5'-phosphate synthase.